The following is a 197-amino-acid chain: Adenylate kinase (197 aa).

An ATP-binding site is contributed by 16-21; sequence GAGKGT. The interval 36 to 65 is NMP; it reads STGDILRDHVARGTALGQQAGPLMEAGQLV. Residues Thr37, Arg42, 63–65, 90–93, and Gln97 contribute to the AMP site; these read QLV and GFPR. Residues 131–147 form an LID region; sequence DRGRQAVAEGRAPRADD. ATP is bound at residue Arg132. Positions 137 to 158 are disordered; the sequence is VAEGRAPRADDNEETARKRQQV. A compositionally biased stretch (basic and acidic residues) spans 141-153; that stretch reads RAPRADDNEETAR. AMP-binding residues include Arg144 and Arg155. Residue Gly183 coordinates ATP.

The protein belongs to the adenylate kinase family. In terms of assembly, monomer.

The protein localises to the cytoplasm. It carries out the reaction AMP + ATP = 2 ADP. It participates in purine metabolism; AMP biosynthesis via salvage pathway; AMP from ADP: step 1/1. Functionally, catalyzes the reversible transfer of the terminal phosphate group between ATP and AMP. Plays an important role in cellular energy homeostasis and in adenine nucleotide metabolism. The protein is Adenylate kinase of Deinococcus radiodurans (strain ATCC 13939 / DSM 20539 / JCM 16871 / CCUG 27074 / LMG 4051 / NBRC 15346 / NCIMB 9279 / VKM B-1422 / R1).